The following is a 940-amino-acid chain: UvrABC system protein A (940 aa).

31–38 contacts ATP; it reads GLSGSGKS. Residues 253–280 form a C4-type zinc finger; sequence CPICGYSMRELEPRLFSFNNPAGACPTC. 2 ABC transporter domains span residues 310 to 587 and 607 to 937; these read WDRR…PESL and ANPE…RFLK. An ATP-binding site is contributed by 640 to 647; sequence GVSGSGKS. A C4-type zinc finger spans residues 740 to 766; the sequence is CEACQGDGVIKVEMHFLPDIYVPCDQC.

It belongs to the ABC transporter superfamily. UvrA family. Forms a heterotetramer with UvrB during the search for lesions.

Its subcellular location is the cytoplasm. The UvrABC repair system catalyzes the recognition and processing of DNA lesions. UvrA is an ATPase and a DNA-binding protein. A damage recognition complex composed of 2 UvrA and 2 UvrB subunits scans DNA for abnormalities. When the presence of a lesion has been verified by UvrB, the UvrA molecules dissociate. Functionally, plays a role in recovery after DNA ADP-ribosylation. This chain is UvrABC system protein A, found in Escherichia coli O127:H6 (strain E2348/69 / EPEC).